The following is a 286-amino-acid chain: Pantothenate synthetase (286 aa).

30-37 serves as a coordination point for ATP; that stretch reads MGNLHEGH. The Proton donor role is filled by His-37. Gln-64 is a binding site for (R)-pantoate. Gln-64 provides a ligand contact to beta-alanine. Residue 151–154 participates in ATP binding; that stretch reads GKKD. Gln-157 contributes to the (R)-pantoate binding site. ATP contacts are provided by residues Leu-180 and 188-191; that span reads LSSR.

This sequence belongs to the pantothenate synthetase family. In terms of assembly, homodimer.

The protein localises to the cytoplasm. The enzyme catalyses (R)-pantoate + beta-alanine + ATP = (R)-pantothenate + AMP + diphosphate + H(+). Its pathway is cofactor biosynthesis; (R)-pantothenate biosynthesis; (R)-pantothenate from (R)-pantoate and beta-alanine: step 1/1. Functionally, catalyzes the condensation of pantoate with beta-alanine in an ATP-dependent reaction via a pantoyl-adenylate intermediate. The chain is Pantothenate synthetase from Leptothrix cholodnii (strain ATCC 51168 / LMG 8142 / SP-6) (Leptothrix discophora (strain SP-6)).